Consider the following 205-residue polypeptide: Thymidylate kinase (205 aa).

An ATP-binding site is contributed by 7 to 14 (GIDGSGKT).

The protein belongs to the thymidylate kinase family.

The enzyme catalyses dTMP + ATP = dTDP + ADP. Functionally, phosphorylation of dTMP to form dTDP in both de novo and salvage pathways of dTTP synthesis. This chain is Thymidylate kinase, found in Wolbachia pipientis subsp. Culex pipiens (strain wPip).